A 125-amino-acid chain; its full sequence is Glycine cleavage system H protein (125 aa).

The 83-residue stretch at 19–101 folds into the Lipoyl-binding domain; it reads EVTVGITDHA…YHEGWLVKLK (83 aa). K60 carries the post-translational modification N6-lipoyllysine.

It belongs to the GcvH family. The glycine cleavage system is composed of four proteins: P, T, L and H. (R)-lipoate is required as a cofactor.

Functionally, the glycine cleavage system catalyzes the degradation of glycine. The H protein shuttles the methylamine group of glycine from the P protein to the T protein. The sequence is that of Glycine cleavage system H protein from Legionella pneumophila (strain Corby).